The sequence spans 123 residues: Small ribosomal subunit protein uS12 (123 aa).

The interval 1-28 is disordered; it reads MPTIQQLIRNPREPKRTRTKTPALKACP. Aspartate 89 carries the post-translational modification 3-methylthioaspartic acid. Residues 104-123 form a disordered region; sequence TQPVKNRKQRRSHYGAKKPK. Residues 108–123 are compositionally biased toward basic residues; it reads KNRKQRRSHYGAKKPK.

The protein belongs to the universal ribosomal protein uS12 family. As to quaternary structure, part of the 30S ribosomal subunit. Contacts proteins S8 and S17. May interact with IF1 in the 30S initiation complex.

In terms of biological role, with S4 and S5 plays an important role in translational accuracy. Its function is as follows. Interacts with and stabilizes bases of the 16S rRNA that are involved in tRNA selection in the A site and with the mRNA backbone. Located at the interface of the 30S and 50S subunits, it traverses the body of the 30S subunit contacting proteins on the other side and probably holding the rRNA structure together. The combined cluster of proteins S8, S12 and S17 appears to hold together the shoulder and platform of the 30S subunit. This Hyphomonas neptunium (strain ATCC 15444) protein is Small ribosomal subunit protein uS12.